The following is a 452-amino-acid chain: Phosphoglucosamine mutase (452 aa).

Ser-98 serves as the catalytic Phosphoserine intermediate. Mg(2+) is bound by residues Ser-98, Asp-239, Asp-241, and Asp-243. Ser-98 bears the Phosphoserine mark.

This sequence belongs to the phosphohexose mutase family. The cofactor is Mg(2+). In terms of processing, activated by phosphorylation.

It catalyses the reaction alpha-D-glucosamine 1-phosphate = D-glucosamine 6-phosphate. Functionally, catalyzes the conversion of glucosamine-6-phosphate to glucosamine-1-phosphate. This Anaplasma marginale (strain Florida) protein is Phosphoglucosamine mutase.